The chain runs to 892 residues: DNA mismatch repair protein MutS (892 aa).

634–641 lines the ATP pocket; sequence GPNMGGKS.

Belongs to the DNA mismatch repair MutS family.

Functionally, this protein is involved in the repair of mismatches in DNA. It is possible that it carries out the mismatch recognition step. This protein has a weak ATPase activity. This chain is DNA mismatch repair protein MutS, found in Paraburkholderia phymatum (strain DSM 17167 / CIP 108236 / LMG 21445 / STM815) (Burkholderia phymatum).